A 253-amino-acid polypeptide reads, in one-letter code: RBPJ-interacting and tubulin-associated protein 1 (253 aa).

3 disordered regions span residues 30-89, 127-175, and 188-253; these read SPAR…KNKY, TPPA…LCVP, and HLTV…PPWK. The span at 71–81 shows a compositional bias: polar residues; that stretch reads SPSSRGSTPNL. Residues 81–97 carry the Nuclear localization signal motif; it reads LTPRKKNKYRLIGHAPS. The tract at residues 112–140 is interaction with RBPJ/RBPSUH; sequence RMAVGDAAKLRTLFWTPPATPRGSHTPCP. The interval 140-253 is interaction with tubulin; that stretch reads PRETPLRAIH…CPPKPKPPWK (114 aa). Polar residues predominate over residues 188–228; the sequence is HLTVPSTGHPASSAPQTNGPWSPRPNTSGATVQSPLVTSKA.

The protein belongs to the RITA family. In terms of assembly, interacts with RBPJ/RBPSUH.

The protein resides in the cytoplasm. Its subcellular location is the nucleus. It is found in the cytoskeleton. The protein localises to the microtubule organizing center. It localises to the centrosome. Its function is as follows. Tubulin-binding protein that acts as a negative regulator of Notch signaling pathway. Shuttles between the cytoplasm and the nucleus and mediates the nuclear export of RBPJ/RBPSUH, thereby preventing the interaction between RBPJ/RBPSUH and NICD product of Notch proteins (Notch intracellular domain), leading to down-regulate Notch-mediated transcription. May play a role in neurogenesis. The chain is RBPJ-interacting and tubulin-associated protein 1 (Rita1) from Mus musculus (Mouse).